Reading from the N-terminus, the 59-residue chain is uncharacterized protein (59 aa).

The disordered stretch occupies residues 27 to 59 (SCFQNRPPEPASFQNLRPEPASLQNLRTEPTSF). A compositionally biased stretch (polar residues) spans 48 to 59 (SLQNLRTEPTSF).

This is an uncharacterized protein from Homo sapiens (Human).